A 450-amino-acid chain; its full sequence is MRLSLVGVAIGLLSSSAIVTAQTYTDCNPLQKTCPPDPALGRSVTYDFTKGSSPDFKPVGSPTYDSNNGAAFSVAKQGDAPLIQSNWYMMFGHVEFVIKTAPGKGIVSSAVLQSDDLDEIDWEWLGANNLYVQTNYFGKGDTGSYNRGAAHDNAGNQDGFHTYTIDWTSTQIVWQIDGKTVRVLTAESAGDHFPQSPMMVKVGVWAGGDPNNAPGTIQWAGGETDYSAGPYTMYLKSLVATDYSTGKSYTYSDKSGSWRSITSDGGQINGNSDAESISTVESAPPVTATIDSAPIPFSGTHRETSSFVTPSIWPWVPKPTTLSSSVAKDTTLPSGWTFSGSRQVQPPSAASSTPPCTSSSLVSSLASPSHSGLKTSSISSVPNSSSATKSTGHLASTATYQISTYDSTLPSFSASIAHVAPTVAAANDLLEAPLGMGVFCALLGGLIAIF.

Positions 1-21 are cleaved as a signal peptide; sequence MRLSLVGVAIGLLSSSAIVTA. C27 and C34 are oxidised to a cystine. One can recognise a GH16 domain in the interval 46–228; the sequence is YDFTKGSSPD…WAGGETDYSA (183 aa). E119 acts as the Nucleophile in catalysis. E123 serves as the catalytic Proton donor. Residues E123, K201, W205, and T216 each coordinate chitin. N383 carries N-linked (GlcNAc...) asparagine glycosylation.

This sequence belongs to the glycosyl hydrolase 16 family. CRH1 subfamily. The GPI-like anchor contains a phosphoceramide lipid group. The anchor position has not been determined.

It localises to the cell membrane. The protein localises to the secreted. It is found in the cell wall. The enzyme catalyses Random endo-hydrolysis of N-acetyl-beta-D-glucosaminide (1-&gt;4)-beta-linkages in chitin and chitodextrins.. Functionally, dual chitinase/transglycosylase that plays a role in cell wall architecture. Chitinase and transglycosylase activities are coupled. Required for the polysaccharide cross-linking at the septa and the cell wall. More specifically, transfers chitin to 1,6-beta-glucan in the cell wall. The sequence is that of Crh-like protein 4 from Aspergillus fumigatus (strain ATCC MYA-4609 / CBS 101355 / FGSC A1100 / Af293) (Neosartorya fumigata).